An 83-amino-acid polypeptide reads, in one-letter code: Kappa-actitoxin-Aer3a (83 aa).

A signal peptide spans 1–22 (MKGQMIICLVLIALCMSVVVMA). Positions 23-49 (QNLRAEELEKANPKDERVRSFERNQKR) are excised as a propeptide. The ShKT domain occupies 51 to 83 (CKDYLPKSECTQFRCRTSMKYKYTNCKKTCGTC). Disulfide bonds link Cys-51–Cys-83, Cys-60–Cys-76, and Cys-65–Cys-80.

It belongs to the sea anemone type 1 potassium channel toxin family. Type 1a subfamily.

Its subcellular location is the secreted. The protein resides in the nematocyst. Its function is as follows. Specifically, dose-dependently and potently blocks the voltage-gated potassium channel Kv1.1/KCNA1 (Ki=1.6 pM). Moderately blocks potassium channel heterotetramers formed by 3 subunits of Kv1.1/KCNA1 and 1 subunit of Kv1.2/KCNA2 (Ki=56 nM) and weakly blocks those formed by 2 subunits of Kv1.1/KCNA1 and 2 subunits of Kv1.2/KCNA2 (Ki=14 nM). This chain is Kappa-actitoxin-Aer3a, found in Anemonia erythraea (Sea anemone).